An 806-amino-acid polypeptide reads, in one-letter code: Integrin beta-7 (806 aa).

Residues Met1–Ser19 form the signal peptide. Residues Glu20–Arg724 lie on the Extracellular side of the membrane. The PSI domain maps to Ser44–Pro92. Intrachain disulfides connect Cys51-Cys476, Cys54-Cys80, Cys64-Cys91, Cys216-Cys223, Cys271-Cys311, Cys412-Cys428, Cys448-Cys474, Cys478-Cys497, Cys488-Cys500, Cys502-Cys511, Cys513-Cys545, Cys527-Cys543, Cys537-Cys548, Cys550-Cys559, Cys561-Cys582, Cys566-Cys580, Cys574-Cys585, Cys587-Cys596, Cys598-Cys621, Cys605-Cys619, Cys613-Cys624, Cys626-Cys635, Cys638-Cys641, Cys645-Cys688, Cys651-Cys670, and Cys654-Cys666. N-linked (GlcNAc...) asparagine glycosylation is present at Asn68. The span at Glu98–Gln107 shows a compositional bias: basic and acidic residues. The disordered stretch occupies residues Glu98–Leu123. The 240-residue stretch at Tyr150 to Leu389 folds into the VWFA domain. Mg(2+) contacts are provided by Ser161 and Ser163. Ca(2+)-binding residues include Ser163, Asp166, Asp167, and Asp198. Asn250 carries an N-linked (GlcNAc...) asparagine glycan. Positions 254, 256, 258, and 259 each coordinate Ca(2+). Position 259 (Glu259) interacts with Mg(2+). Residue Asn279 is glycosylated (N-linked (GlcNAc...) asparagine). Ca(2+) contacts are provided by Asp289 and Glu373. An N-linked (GlcNAc...) asparagine glycan is attached at Asn434. I-EGF domains follow at residues Cys478–Glu512, Cys513–Glu560, Cys561–Glu597, and Cys598–Asp636. Residue Asn531 is glycosylated (N-linked (GlcNAc...) asparagine). Asn590 is a glycosylation site (N-linked (GlcNAc...) asparagine). Asn665 and Asn674 each carry an N-linked (GlcNAc...) asparagine glycan. The helical transmembrane segment at Ala725–Tyr745 threads the bilayer. The Cytoplasmic portion of the chain corresponds to Arg746–Asp806. Residues Asn786 to Asp806 form a disordered region.

The protein belongs to the integrin beta chain family. Heterodimer of an alpha and a beta subunit. ITGB7/beta-7 associates with either ITGA4/alpha-4 or ITGAE/alpha-E. Integrin ITGA4/ITGB7 interacts with MADCAM1. Integrin ITGA4/ITGB7 interacts with VCAM1 and fibronectin. Interacts with FLNA (via filamin repeats 4, 9, 12, 17, 19, 21, and 23).

The protein localises to the cell membrane. Functionally, integrin ITGA4/ITGB7 (alpha-4/beta-7) (Peyer patches-specific homing receptor LPAM-1) is an adhesion molecule that mediates lymphocyte migration and homing to gut-associated lymphoid tissue (GALT). Integrin ITGA4/ITGB7 interacts with the cell surface adhesion molecules MADCAM1 which is normally expressed by the vascular endothelium of the gastrointestinal tract. Also interacts with VCAM1 and fibronectin, an extracellular matrix component. It recognizes one or more domains within the alternatively spliced CS-1 region of fibronectin. Interactions involve the tripeptide L-D-T in MADCAM1, and L-D-V in fibronectin. Integrin ITGAE/ITGB7 (alpha-E/beta-7, HML-1) is a receptor for E-cadherin. In Mus musculus (Mouse), this protein is Integrin beta-7 (Itgb7).